The following is a 185-amino-acid chain: Ribosome-recycling factor (185 aa).

It belongs to the RRF family.

It is found in the cytoplasm. Its function is as follows. Responsible for the release of ribosomes from messenger RNA at the termination of protein biosynthesis. May increase the efficiency of translation by recycling ribosomes from one round of translation to another. In Syntrophobacter fumaroxidans (strain DSM 10017 / MPOB), this protein is Ribosome-recycling factor.